Here is a 179-residue protein sequence, read N- to C-terminus: Large ribosomal subunit protein uL5 (179 aa).

Belongs to the universal ribosomal protein uL5 family. In terms of assembly, part of the 50S ribosomal subunit; part of the 5S rRNA/L5/L18/L25 subcomplex. Contacts the 5S rRNA and the P site tRNA. Forms a bridge to the 30S subunit in the 70S ribosome.

Functionally, this is one of the proteins that bind and probably mediate the attachment of the 5S RNA into the large ribosomal subunit, where it forms part of the central protuberance. In the 70S ribosome it contacts protein S13 of the 30S subunit (bridge B1b), connecting the 2 subunits; this bridge is implicated in subunit movement. Contacts the P site tRNA; the 5S rRNA and some of its associated proteins might help stabilize positioning of ribosome-bound tRNAs. The chain is Large ribosomal subunit protein uL5 from Rickettsia felis (strain ATCC VR-1525 / URRWXCal2) (Rickettsia azadi).